Consider the following 244-residue polypeptide: MNLEGKIALVTGASRGIGRAIAELLVERGATVIGTATSEGGAAAISEYLGENGKGLALNVTDVESIEATLKTINDECGAIDILVNNAGITRDNLLMRMKDDEWNDIINTNLTPIYRMSKAVLRGMMKKRAGRIINVGSVVGTMGNAGQTNYAAAKAGVIGFTKSMAREVASRGVTVNTVAPGFIETDMTKALNDDQRAATLSNVPAGRLGDPREIASAVVFLASPEAAYITGETLHVNGGMYMV.

NADP(+)-binding positions include 12–15, Thr-37, 59–60, and Asn-86; these read GASR and NV. Ser-138 contacts substrate. Residue Tyr-151 is the Proton acceptor of the active site. NADP(+) contacts are provided by residues 151-155 and Ile-184; that span reads YAAAK.

The protein belongs to the short-chain dehydrogenases/reductases (SDR) family. Homotetramer.

It catalyses the reaction a (3R)-hydroxyacyl-[ACP] + NADP(+) = a 3-oxoacyl-[ACP] + NADPH + H(+). It participates in lipid metabolism; fatty acid biosynthesis. In terms of biological role, catalyzes the NADPH-dependent reduction of beta-ketoacyl-ACP substrates to beta-hydroxyacyl-ACP products, the first reductive step in the elongation cycle of fatty acid biosynthesis. This chain is 3-oxoacyl-[acyl-carrier-protein] reductase FabG (fabG), found in Vibrio harveyi (Beneckea harveyi).